The following is a 521-amino-acid chain: GMP synthase [glutamine-hydrolyzing] (521 aa).

Residues 8–203 (KILILDFGAQ…VVDVCGCQTL (196 aa)) form the Glutamine amidotransferase type-1 domain. C85 functions as the Nucleophile in the catalytic mechanism. Residues H177 and E179 contribute to the active site. In terms of domain architecture, GMPS ATP-PPase spans 204 to 396 (WTAANIIEDQ…LGLPRTMVYR (193 aa)). Position 231–237 (231–237 (SGGVDSS)) interacts with ATP.

As to quaternary structure, homodimer.

The enzyme catalyses XMP + L-glutamine + ATP + H2O = GMP + L-glutamate + AMP + diphosphate + 2 H(+). The protein operates within purine metabolism; GMP biosynthesis; GMP from XMP (L-Gln route): step 1/1. Functionally, catalyzes the synthesis of GMP from XMP. The chain is GMP synthase [glutamine-hydrolyzing] from Xanthomonas axonopodis pv. citri (strain 306).